A 23-amino-acid chain; its full sequence is Prolamin alpha-3 (23 aa).

The chain is Prolamin alpha-3 from Dactylis glomerata (Orchard grass).